A 318-amino-acid polypeptide reads, in one-letter code: uncharacterized protein (318 aa).

4 consecutive transmembrane segments (helical) span residues 112–132 (VIGVLSFLFSKFVFTLVPVFL), 147–167 (IAIESLFKLILLLGYIYFLSM), 209–229 (CGSSFILFTIIVGMFVYLLVP), and 237–257 (VIDRVALIPVVLGISFEVLQL).

It localises to the cell membrane. This is an uncharacterized protein from Bacillus subtilis (strain 168).